The primary structure comprises 184 residues: Peptide methionine sulfoxide reductase (184 aa).

Phosphoserine is present on Ser58.

This sequence belongs to the MsrA Met sulfoxide reductase family.

The enzyme catalyses L-methionyl-[protein] + [thioredoxin]-disulfide + H2O = L-methionyl-(S)-S-oxide-[protein] + [thioredoxin]-dithiol. It catalyses the reaction [thioredoxin]-disulfide + L-methionine + H2O = L-methionine (S)-S-oxide + [thioredoxin]-dithiol. In terms of biological role, has an important function as a repair enzyme for proteins that have been inactivated by oxidation. Catalyzes the reversible oxidation-reduction of methionine sulfoxide in proteins to methionine. Also able to reduce dimethyl sulfoxide (DMSO) as well, with DMS as the product. In Saccharomyces cerevisiae (strain ATCC 204508 / S288c) (Baker's yeast), this protein is Peptide methionine sulfoxide reductase (MXR1).